The sequence spans 75 residues: Phytosulfokines (75 aa).

A signal peptide spans 1-22; sequence MSSKAITLLLIALLFSLSLAQA. Residues 23 to 66 constitute a propeptide that is removed on maturation; sequence ARPLQPADSTKSVHVIPEKVHDEACEGVGEEECLMRRTLTAHVD. Residues Tyr-67 and Tyr-69 each carry the sulfotyrosine modification. Positions 72-75 are excised as a propeptide; sequence DHNP.

It belongs to the phytosulfokine family. Sulfation is important for activity and for the binding to a putative membrane receptor. Deletion of the sulfate groups of Tyr-67 and Tyr-69 resulted in compounds with respectively 0.6% and 4% of the activity. Post-translationally, PSK-alpha is produced by endopeptidase digestion. PSK-beta is produced from PSK-alpha by exopeptidase digestion.

It is found in the secreted. Promotes plant cell differentiation, organogenesis and somatic embryogenesis as well as cell proliferation. In Asparagus officinalis (Garden asparagus), this protein is Phytosulfokines (PSK).